Reading from the N-terminus, the 162-residue chain is MTDQPNNGAVANEENGPQFSLQRIYVRDLSFEAPKSPAIFRQEWTPTVSLDLNTRQKQLEGDFYEVVLTLSVTVNNGDEVAFIVEVQQAGIFLIKGLDDGAMSHTLGAFCPNILFPYAREAIDNLVVRGSFPALMLAPVNFDALYAQELQRMQEAGETPTVQ.

This sequence belongs to the SecB family. In terms of assembly, homotetramer, a dimer of dimers. One homotetramer interacts with 1 SecA dimer.

The protein resides in the cytoplasm. One of the proteins required for the normal export of preproteins out of the cell cytoplasm. It is a molecular chaperone that binds to a subset of precursor proteins, maintaining them in a translocation-competent state. It also specifically binds to its receptor SecA. In Pseudomonas savastanoi pv. phaseolicola (strain 1448A / Race 6) (Pseudomonas syringae pv. phaseolicola (strain 1448A / Race 6)), this protein is Protein-export protein SecB.